A 512-amino-acid polypeptide reads, in one-letter code: MEKFKRYLETFRSEQKYFLYPLLFQEYIYALGHDHGLNGPIPYESIENLGYGDKSSSLIVKRLIIRMHKQNHFLISCNENDFQQNRLLGRKNNLDSKIISEAFSIIVEIPFSFQLVSCLEKKREIAKSHNLRSIHSIFPFFEDNIFYLYHISDVLIPYPIHPEILVQTLRYWIQDVPSLHLLRIFLYEYCHSGSFISKKKFFSFSKKENERLSLFIYNSYVYEWESIFLFIRKQSSHLRSISWEALLERVHFYGKIEHLVVVLCNDFQKALWVFKDCFMHYVRYQGKSLLISKGTDLLMKKWKYHFIYLWQCNFHLWSQPHRIHINQLDNRSFHFLGYASSVRINLSVVKSQILENSFLMETSVKKFETTVPIISLIGSLSKEKFCNLSGHPTSKAIWADSSDSDIMERFGRVCRNLSHYYSGCSKKQILYRIKYILRLSCARTLARKHKSTVRVFLKRLGSGFLKEFLAEEEQVLSFFFPRSYPTSYRSNKDKERIWYLDITHTNDLANHE.

The protein belongs to the intron maturase 2 family. MatK subfamily.

The protein localises to the plastid. It localises to the chloroplast. In terms of biological role, usually encoded in the trnK tRNA gene intron. Probably assists in splicing its own and other chloroplast group II introns. The chain is Maturase K from Piper cenocladum (Ant piper).